Reading from the N-terminus, the 932-residue chain is DNA mismatch repair protein MutS (932 aa).

615–622 (GPNMAGKS) is a binding site for ATP.

It belongs to the DNA mismatch repair MutS family.

Functionally, this protein is involved in the repair of mismatches in DNA. It is possible that it carries out the mismatch recognition step. This protein has a weak ATPase activity. In Clostridium botulinum (strain Hall / ATCC 3502 / NCTC 13319 / Type A), this protein is DNA mismatch repair protein MutS.